A 330-amino-acid chain; its full sequence is Aspartate--ammonia ligase (330 aa).

It belongs to the class-II aminoacyl-tRNA synthetase family. AsnA subfamily.

It is found in the cytoplasm. The catalysed reaction is L-aspartate + NH4(+) + ATP = L-asparagine + AMP + diphosphate + H(+). Its pathway is amino-acid biosynthesis; L-asparagine biosynthesis; L-asparagine from L-aspartate (ammonia route): step 1/1. In Shigella flexneri serotype 5b (strain 8401), this protein is Aspartate--ammonia ligase.